We begin with the raw amino-acid sequence, 220 residues long: Aklanonic acid methyltransferase DauC (220 aa).

This sequence belongs to the methyltransferase superfamily. DnrC family. As to quaternary structure, homodimer.

It catalyses the reaction aklanonate + S-adenosyl-L-methionine = methyl aklanonate + S-adenosyl-L-homocysteine. The protein operates within antibiotic biosynthesis; daunorubicin biosynthesis. Its pathway is antibiotic biosynthesis; carminomycin biosynthesis. It participates in antibiotic biosynthesis; rhodomycin biosynthesis. It functions in the pathway antibiotic biosynthesis; aclacinomycin biosynthesis. Its function is as follows. Involved in the biosynthesis of aklavinone which is an important precursor common to the formation of the clinically significant anthracyclines such as carminomycin, daunorubicin (daunomycin), rhodomycin, aclacinomycin T (aklavin) and aclacinomycin A (aclarubicin). These compounds are aromatic polyketide antibiotics that exhibit high cytotoxicity and are widely applied in the chemotherapy of a variety of cancers. Catalyzes the methyl esterification of aklanonic acid to yield aklanonic acid methyl ester. This chain is Aklanonic acid methyltransferase DauC (dauC), found in Streptomyces sp. (strain C5).